The sequence spans 178 residues: Large ribosomal subunit protein uL6 (178 aa).

This sequence belongs to the universal ribosomal protein uL6 family. In terms of assembly, part of the 50S ribosomal subunit.

In terms of biological role, this protein binds to the 23S rRNA, and is important in its secondary structure. It is located near the subunit interface in the base of the L7/L12 stalk, and near the tRNA binding site of the peptidyltransferase center. This Geobacillus kaustophilus (strain HTA426) protein is Large ribosomal subunit protein uL6.